Here is a 270-residue protein sequence, read N- to C-terminus: DNA packaging protein OPG160 (270 aa).

25-32 (GGSGSGKT) contributes to the ATP binding site.

The protein belongs to the orthopoxvirus OPG160 protein family. Interacts with protein OPG137.

Its function is as follows. Participates in viral DNA packaging and virion morphogenesis. This is DNA packaging protein OPG160 (OPG160) from Variola virus (isolate Human/India/Ind3/1967) (VARV).